The chain runs to 350 residues: MEVRHDWTVAEVRALLEKPFMDLMFEAQVVHRQYQEHNHVQVSTLLSIKTGACPEDCKYCPQSAHYRTDVDKERLMEVERVLDAAQKAKNAGSTRFCMGAAWKNPKERDMPHLTDMIKGVKGMGLETCMTLGMLTPDQAGELADAGLDYYNHNLDTSPEFYGSIITTRTYQDRLDTLSHVRDAGMKICSGGIIGMGESTNDRAGLLVELANLPVHPESVPINMLVKVKGTPMENVDDVESFDFVKLIAIARIMMPMSAVRLSAGRENMNEQMQAMCFMAGANSIFYGCKLLTTPNPDEDTDMQLFKKLGINSQQVAQKPDEIQENELLDQVVERVAARPTKDDMFYDATV.

The Radical SAM core domain maps to 38–265 (NHVQVSTLLS…MSAVRLSAGR (228 aa)). Residues Cys-53, Cys-57, and Cys-60 each contribute to the [4Fe-4S] cluster site. Cys-97, Cys-128, Cys-188, and Arg-260 together coordinate [2Fe-2S] cluster.

It belongs to the radical SAM superfamily. Biotin synthase family. In terms of assembly, homodimer. The cofactor is [4Fe-4S] cluster. [2Fe-2S] cluster is required as a cofactor.

The enzyme catalyses (4R,5S)-dethiobiotin + (sulfur carrier)-SH + 2 reduced [2Fe-2S]-[ferredoxin] + 2 S-adenosyl-L-methionine = (sulfur carrier)-H + biotin + 2 5'-deoxyadenosine + 2 L-methionine + 2 oxidized [2Fe-2S]-[ferredoxin]. It functions in the pathway cofactor biosynthesis; biotin biosynthesis; biotin from 7,8-diaminononanoate: step 2/2. In terms of biological role, catalyzes the conversion of dethiobiotin (DTB) to biotin by the insertion of a sulfur atom into dethiobiotin via a radical-based mechanism. The polypeptide is Biotin synthase (Vibrio atlanticus (strain LGP32) (Vibrio splendidus (strain Mel32))).